Reading from the N-terminus, the 460-residue chain is UDP-N-acetylmuramate--L-alanine ligase (460 aa).

An ATP-binding site is contributed by 116 to 122 (GSHGKTT).

It belongs to the MurCDEF family.

The protein resides in the cytoplasm. It carries out the reaction UDP-N-acetyl-alpha-D-muramate + L-alanine + ATP = UDP-N-acetyl-alpha-D-muramoyl-L-alanine + ADP + phosphate + H(+). It participates in cell wall biogenesis; peptidoglycan biosynthesis. Its function is as follows. Cell wall formation. This Caldanaerobacter subterraneus subsp. tengcongensis (strain DSM 15242 / JCM 11007 / NBRC 100824 / MB4) (Thermoanaerobacter tengcongensis) protein is UDP-N-acetylmuramate--L-alanine ligase.